A 446-amino-acid chain; its full sequence is N-succinylarginine dihydrolase 2 (446 aa).

Substrate is bound by residues 20–29 (VGLSPGNLAS), Asn-111, and 138–139 (HR). Glu-175 is an active-site residue. Arg-212 serves as a coordination point for substrate. The active site involves His-246. Substrate is bound by residues Asp-248 and Asn-361. The active-site Nucleophile is Cys-367.

Belongs to the succinylarginine dihydrolase family. Homodimer.

It carries out the reaction N(2)-succinyl-L-arginine + 2 H2O + 2 H(+) = N(2)-succinyl-L-ornithine + 2 NH4(+) + CO2. The protein operates within amino-acid degradation; L-arginine degradation via AST pathway; L-glutamate and succinate from L-arginine: step 2/5. Catalyzes the hydrolysis of N(2)-succinylarginine into N(2)-succinylornithine, ammonia and CO(2). In Caulobacter vibrioides (strain ATCC 19089 / CIP 103742 / CB 15) (Caulobacter crescentus), this protein is N-succinylarginine dihydrolase 2.